The sequence spans 159 residues: MVDEFTHLDNQGKARMVEINQKPDTSRRAVARGSIYMKANTLQKVKTNEMEKGDVLGVARVAAIMGTKRTGDLIPMCHPLMLTGIEVNFNFDEENCKIDIEVIVKTTGKTGVEMEALTGVSLAALTIYDMCKSIDKTMKIEHIRLAKKSGGQSGEIENE.

Substrate contacts are provided by residues 76–78 and 114–115; these read MCH and ME. The active site involves Asp-129.

The protein belongs to the MoaC family. In terms of assembly, homohexamer; trimer of dimers.

The catalysed reaction is (8S)-3',8-cyclo-7,8-dihydroguanosine 5'-triphosphate = cyclic pyranopterin phosphate + diphosphate. It participates in cofactor biosynthesis; molybdopterin biosynthesis. Functionally, catalyzes the conversion of (8S)-3',8-cyclo-7,8-dihydroguanosine 5'-triphosphate to cyclic pyranopterin monophosphate (cPMP). The sequence is that of Cyclic pyranopterin monophosphate synthase from Natranaerobius thermophilus (strain ATCC BAA-1301 / DSM 18059 / JW/NM-WN-LF).